A 72-amino-acid polypeptide reads, in one-letter code: Translation initiation factor IF-1 (72 aa).

Residues 1-72 (MAKSDVIEVE…SKGRITYRFK (72 aa)) enclose the S1-like domain.

It belongs to the IF-1 family. In terms of assembly, component of the 30S ribosomal translation pre-initiation complex which assembles on the 30S ribosome in the order IF-2 and IF-3, IF-1 and N-formylmethionyl-tRNA(fMet); mRNA recruitment can occur at any time during PIC assembly.

The protein resides in the cytoplasm. Functionally, one of the essential components for the initiation of protein synthesis. Stabilizes the binding of IF-2 and IF-3 on the 30S subunit to which N-formylmethionyl-tRNA(fMet) subsequently binds. Helps modulate mRNA selection, yielding the 30S pre-initiation complex (PIC). Upon addition of the 50S ribosomal subunit IF-1, IF-2 and IF-3 are released leaving the mature 70S translation initiation complex. This is Translation initiation factor IF-1 from Levilactobacillus brevis (strain ATCC 367 / BCRC 12310 / CIP 105137 / JCM 1170 / LMG 11437 / NCIMB 947 / NCTC 947) (Lactobacillus brevis).